We begin with the raw amino-acid sequence, 212 residues long: Glycerol-3-phosphate acyltransferase (212 aa).

Transmembrane regions (helical) follow at residues 8–28 (IFLS…PFAV), 59–79 (AAAA…LWLA), 90–110 (VFAL…FLGF), 122–142 (ILLA…VIIA), 148–168 (SSLA…FGSG), and 169–189 (VAWY…LLLF).

It belongs to the PlsY family. Probably interacts with PlsX.

The protein localises to the cell inner membrane. The catalysed reaction is an acyl phosphate + sn-glycerol 3-phosphate = a 1-acyl-sn-glycero-3-phosphate + phosphate. It functions in the pathway lipid metabolism; phospholipid metabolism. Its function is as follows. Catalyzes the transfer of an acyl group from acyl-phosphate (acyl-PO(4)) to glycerol-3-phosphate (G3P) to form lysophosphatidic acid (LPA). This enzyme utilizes acyl-phosphate as fatty acyl donor, but not acyl-CoA or acyl-ACP. This chain is Glycerol-3-phosphate acyltransferase, found in Bordetella petrii (strain ATCC BAA-461 / DSM 12804 / CCUG 43448).